Consider the following 189-residue polypeptide: Crossover junction endodeoxyribonuclease RuvC (189 aa).

Catalysis depends on residues D11, E71, and D143. 3 residues coordinate Mg(2+): D11, E71, and D143.

It belongs to the RuvC family. Homodimer which binds Holliday junction (HJ) DNA. The HJ becomes 2-fold symmetrical on binding to RuvC with unstacked arms; it has a different conformation from HJ DNA in complex with RuvA. In the full resolvosome a probable DNA-RuvA(4)-RuvB(12)-RuvC(2) complex forms which resolves the HJ. It depends on Mg(2+) as a cofactor.

It localises to the cytoplasm. The catalysed reaction is Endonucleolytic cleavage at a junction such as a reciprocal single-stranded crossover between two homologous DNA duplexes (Holliday junction).. In terms of biological role, the RuvA-RuvB-RuvC complex processes Holliday junction (HJ) DNA during genetic recombination and DNA repair. Endonuclease that resolves HJ intermediates. Cleaves cruciform DNA by making single-stranded nicks across the HJ at symmetrical positions within the homologous arms, yielding a 5'-phosphate and a 3'-hydroxyl group; requires a central core of homology in the junction. The consensus cleavage sequence is 5'-(A/T)TT(C/G)-3'. Cleavage occurs on the 3'-side of the TT dinucleotide at the point of strand exchange. HJ branch migration catalyzed by RuvA-RuvB allows RuvC to scan DNA until it finds its consensus sequence, where it cleaves and resolves the cruciform DNA. This chain is Crossover junction endodeoxyribonuclease RuvC, found in Methylorubrum extorquens (strain CM4 / NCIMB 13688) (Methylobacterium extorquens).